A 996-amino-acid chain; its full sequence is Low-density lipoprotein receptor-related protein 8 (996 aa).

Positions 1 to 28 (MGRPELGALRPLALLLLLLLQLQHLSAA) are cleaved as a signal peptide. Residues 29–858 (DPLPGGQGPV…GSQMGSTVTA (830 aa)) are Extracellular-facing. LDL-receptor class A domains lie at 40-76 (ECEE…DDCP), 79-117 (TCAD…ATCS), 120-158 (ECPA…AGCP), 160-196 (LCAP…RGCS), 199-238 (ACPP…ELCG), 250-287 (ACAP…ADCS), 290-326 (PCRE…AGCL), and 330-369 (TCEG…KVCG). 30 cysteine pairs are disulfide-bonded: Cys41–Cys53, Cys48–Cys66, Cys60–Cys75, Cys80–Cys92, Cys87–Cys105, Cys99–Cys116, Cys121–Cys135, Cys128–Cys148, Cys142–Cys157, Cys161–Cys173, Cys168–Cys186, Cys180–Cys195, Cys200–Cys213, Cys207–Cys226, Cys220–Cys237, Cys251–Cys264, Cys259–Cys277, Cys271–Cys286, Cys291–Cys303, Cys298–Cys316, Cys310–Cys325, Cys331–Cys344, Cys339–Cys357, Cys351–Cys368, Cys373–Cys384, Cys380–Cys393, Cys395–Cys407, Cys413–Cys423, Cys419–Cys432, and Cys434–Cys447. Positions 58, 61, 63, 65, 71, and 72 each coordinate Ca(2+). Asn170 carries an N-linked (GlcNAc...) asparagine glycan. Residues 364–408 (PQKVCGLNECLHNNGGCSHICTDLKIGFECTCPAGFQLLDQKTCG) form the EGF-like 1 domain. The EGF-like 2; calcium-binding domain occupies 409-448 (DIDECQDPDACSQICVNYKGYFKCECHPGYEMDTLTKNCK). LDL-receptor class B repeat units follow at residues 495–541 (NRIY…DWVH), 542–584 (KHIY…DPLR), 585–628 (GFMY…DLLS), 629–671 (QRLY…AVFE), and 672–714 (DKVF…FHEL). Asn551 is a glycosylation site (N-linked (GlcNAc...) asparagine). The interval 773–831 (STSTTTLASAMTRTVPATTRAPGTTIHDPTYQNHSTETPSQTAAAPHSVNVPRAPSTSP) is clustered O-linked oligosaccharides. The segment at 778–851 (TLASAMTRTV…SQHYGNEGSQ (74 aa)) is disordered. A compositionally biased stretch (polar residues) spans 802-815 (TYQNHSTETPSQTA). Asn805 carries an N-linked (GlcNAc...) asparagine glycan. Residues 824 to 839 (PRAPSTSPSTPSPATS) are compositionally biased toward low complexity. N-linked (GlcNAc...) asparagine glycosylation is present at Asn840. Residues 840–851 (NHSQHYGNEGSQ) show a composition bias toward polar residues. Residues 859–881 (AVIGVIVPIVVIALLCMSGYLIW) traverse the membrane as a helical segment. Residues 882–996 (RNWKRKNTKS…ALSLEDDGLP (115 aa)) lie on the Cytoplasmic side of the membrane.

It belongs to the LDLR family. In terms of assembly, homooligomer. Interacts with VLDLR. Reelin associates with two or more receptor molecules. Interacts with DAB1 and JNK-interacting proteins. Interacts with SNX17. Interacts with PCSK9. Interacts with MDK; this interaction is calcium dependent. Interacts with CLU. In terms of processing, O-glycosylated. Some alternatively spliced isoforms lack the O-linked sugar domain. Undergoes sequential, furin and gamma-secretase dependent, proteolytic processing, resulting in the extracellular release of the entire ligand-binding domain as a soluble polypeptide and in the intracellular domain (ICD) release into the cytoplasm. The gamma-secretase-dependent proteolytical processing occurs after the bulk of the extracellular domain has been shed, in a furin-dependent manner, in alternatively spliced isoforms carrying the furin cleavage site. Hypoglycosylation (mainly hypo-O-glycosylation) leads to increased extracellular cleavage, which in turn results in accelerating release of the intracellular domain (ICD) by the gamma-secretase. The resulting receptor fragment is able to inhibit Reelin signaling and in particular the Reelin-induced DAB1 phosphorylation. Post-translationally, tyrosine phosphorylated upon apoE binding. In terms of processing, ubiquitinated by MYLIP leading to degradation. Expressed in neurons throughout the brain, with strong expression in pyramidal neurons of the hippocampus, granule cells of the dentate gyrus, cortical neurons and Purkinje cells of the cerebellum. Also expressed in the epithelium of the choroid plexus and of the blood vessels (apical expression), as well as in the epididymis.

It localises to the cell membrane. Its subcellular location is the secreted. Its function is as follows. Cell surface receptor for Reelin (RELN) and apolipoprotein E (apoE)-containing ligands. LRP8 participates in transmitting the extracellular Reelin signal to intracellular signaling processes, by binding to DAB1 on its cytoplasmic tail. Reelin acts via both the VLDL receptor (VLDLR) and LRP8 to regulate DAB1 tyrosine phosphorylation and microtubule function in neurons. LRP8 has higher affinity for Reelin than VLDLR. LRP8 is thus a key component of the Reelin pathway which governs neuronal layering of the forebrain during embryonic brain development. Binds the endoplasmic reticulum resident receptor-associated protein (RAP). Binds dimers of beta 2-glycoprotein I and may be involved in the suppression of platelet aggregation in the vasculature. Highly expressed in the initial segment of the epididymis, where it affects the functional expression of clusterin and phospholipid hydroperoxide glutathione peroxidase (PHGPx), two proteins required for sperm maturation. May also function as an endocytic receptor. Not required for endocytic uptake of SEPP1 in the kidney which is mediated by LRP2. Together with its ligand, apolipoprotein E (apoE), may indirectly play a role in the suppression of the innate immune response by controlling the survival of myeloid-derived suppressor cells. The sequence is that of Low-density lipoprotein receptor-related protein 8 (Lrp8) from Mus musculus (Mouse).